We begin with the raw amino-acid sequence, 83 residues long: Conotoxin Pu6.1 (83 aa).

Residues 1-19 (MKLVLAIVLILMLVSLSTG) form the signal peptide. Residues 20-42 (AEESGQEISMVGPPLYIWDPIPP) constitute a propeptide that is removed on maturation. 3 disulfides stabilise this stretch: C43–C57, C50–C62, and C56–C78.

This sequence belongs to the conotoxin I3 superfamily. Expressed by the venom duct.

Its subcellular location is the secreted. The sequence is that of Conotoxin Pu6.1 from Conus pulicarius (Flea-bitten cone).